A 592-amino-acid chain; its full sequence is uncharacterized protein (592 aa).

This is an uncharacterized protein from Acanthamoeba polyphaga mimivirus (APMV).